A 525-amino-acid polypeptide reads, in one-letter code: GMP synthase [glutamine-hydrolyzing] (525 aa).

Residues 9-207 enclose the Glutamine amidotransferase type-1 domain; the sequence is RILILDFGSQ…VKEICHCEAL (199 aa). C86 acts as the Nucleophile in catalysis. Catalysis depends on residues H181 and E183. In terms of domain architecture, GMPS ATP-PPase spans 208 to 400; sequence WTPATIIEDA…LGLPYNMLYR (193 aa). 235–241 is an ATP binding site; that stretch reads SGGVDSS.

In terms of assembly, homodimer.

It carries out the reaction XMP + L-glutamine + ATP + H2O = GMP + L-glutamate + AMP + diphosphate + 2 H(+). Its pathway is purine metabolism; GMP biosynthesis; GMP from XMP (L-Gln route): step 1/1. Functionally, catalyzes the synthesis of GMP from XMP. This is GMP synthase [glutamine-hydrolyzing] from Tolumonas auensis (strain DSM 9187 / NBRC 110442 / TA 4).